The chain runs to 274 residues: S-methyl-5'-thioadenosine phosphorylase (274 aa).

Residues Ser-20, 62 to 63 (RH), and 95 to 96 (SA) each bind phosphate. Substrate is bound at residue Met-194. Thr-195 provides a ligand contact to phosphate. A substrate-binding site is contributed by 218–220 (DYD).

Belongs to the PNP/MTAP phosphorylase family. MTAP subfamily. As to quaternary structure, homohexamer. Dimer of a homotrimer.

It catalyses the reaction S-methyl-5'-thioadenosine + phosphate = 5-(methylsulfanyl)-alpha-D-ribose 1-phosphate + adenine. Its pathway is amino-acid biosynthesis; L-methionine biosynthesis via salvage pathway; S-methyl-5-thio-alpha-D-ribose 1-phosphate from S-methyl-5'-thioadenosine (phosphorylase route): step 1/1. Catalyzes the reversible phosphorylation of S-methyl-5'-thioadenosine (MTA) to adenine and 5-methylthioribose-1-phosphate. Involved in the breakdown of MTA, a major by-product of polyamine biosynthesis. Responsible for the first step in the methionine salvage pathway after MTA has been generated from S-adenosylmethionine. Has broad substrate specificity with 6-aminopurine nucleosides as preferred substrates. The chain is S-methyl-5'-thioadenosine phosphorylase from Hyperthermus butylicus (strain DSM 5456 / JCM 9403 / PLM1-5).